A 350-amino-acid chain; its full sequence is Phenylalanine--tRNA ligase alpha subunit (350 aa).

Residue Glu271 participates in Mg(2+) binding.

Belongs to the class-II aminoacyl-tRNA synthetase family. Phe-tRNA synthetase alpha subunit type 1 subfamily. As to quaternary structure, tetramer of two alpha and two beta subunits. Requires Mg(2+) as cofactor.

It is found in the cytoplasm. It catalyses the reaction tRNA(Phe) + L-phenylalanine + ATP = L-phenylalanyl-tRNA(Phe) + AMP + diphosphate + H(+). The sequence is that of Phenylalanine--tRNA ligase alpha subunit from Paracidovorax citrulli (strain AAC00-1) (Acidovorax citrulli).